The sequence spans 208 residues: Urease accessory protein UreG (208 aa).

12–19 contacts GTP; it reads GPVGAGKT.

Belongs to the SIMIBI class G3E GTPase family. UreG subfamily. As to quaternary structure, homodimer. UreD, UreF and UreG form a complex that acts as a GTP-hydrolysis-dependent molecular chaperone, activating the urease apoprotein by helping to assemble the nickel containing metallocenter of UreC. The UreE protein probably delivers the nickel.

It is found in the cytoplasm. Its function is as follows. Facilitates the functional incorporation of the urease nickel metallocenter. This process requires GTP hydrolysis, probably effectuated by UreG. In Rhodobacter capsulatus (Rhodopseudomonas capsulata), this protein is Urease accessory protein UreG.